The sequence spans 902 residues: Respiratory burst oxidase homolog protein A (902 aa).

Residues 1–344 (MMNRSEMQKL…KYFLFDNWKR (344 aa)) lie on the Cytoplasmic side of the membrane. 2 disordered regions span residues 63-87 (KSPN…RSGR) and 107-130 (ASSV…RRSK). Residues 74–87 (YEDQSLLRQGRSGR) are compositionally biased toward polar residues. The span at 107–116 (ASSVSSSSAR) shows a compositional bias: low complexity. EF-hand-like regions lie at residues 163-173 (TMTTNGLLHRS) and 198-209 (ENVSGDSININE). EF-hand domains lie at 221-256 (DFDS…SASA) and 265-300 (QADE…APMQ). 5 residues coordinate Ca(2+): aspartate 234, aspartate 236, aspartate 238, arginine 240, and glutamate 245. Serine 311 and serine 315 each carry phosphoserine. A helical membrane pass occupies residues 345 to 365 (VWVMALWIGAMAGLFTWKFME). Over 366–380 (YRKRSAYEVMGVCVC) the chain is Extracellular. Residues 381 to 401 (IAKGAAETLKLNMAMILLPVC) traverse the membrane as a helical segment. The Ferric oxidoreductase domain maps to 383–540 (KGAAETLKLN…LFVIVYSLLV (158 aa)). Topologically, residues 402 to 428 (RNTITWLRTKTKLSAIVPFDDSLNFHK) are cytoplasmic. Residues 429 to 449 (VIAIGISVGVGIHATSHLACD) form a helical membrane-spanning segment. Residues 450–484 (FPRLIAADEDQYEPMEKYFGPQTKRYLDFVQSVEG) lie on the Extracellular side of the membrane. The chain crosses the membrane as a helical span at residues 485–505 (VTGIGMVVLMTIAFTLATTWF). Residues 506 to 529 (RRNKLNLPGPLKKITGFNAFWYSH) are Cytoplasmic-facing. Residues 530–550 (HLFVIVYSLLVVHGFYVYLII) traverse the membrane as a helical segment. Residues 551–709 (EPWYKKTTWM…PAQDYKKFEV (159 aa)) are Extracellular-facing. Positions 575-703 (IRAFRSSVEA…DGPYGAPAQD (129 aa)) constitute an FAD-binding FR-type domain. A helical membrane pass occupies residues 710–730 (VLLVGLGIGATPMISIVSDII). Residues 731–902 (NNLKGVEEGS…TKFIFHKENF (172 aa)) are Cytoplasmic-facing. The disordered stretch occupies residues 738-760 (EGSNRRQSPIHNMVTPPVSPSRK).

It belongs to the RBOH (TC 5.B.1.3) family. Monomer and homodimer.

Its subcellular location is the membrane. In terms of biological role, calcium-dependent NADPH oxidase that generates superoxide. This Arabidopsis thaliana (Mouse-ear cress) protein is Respiratory burst oxidase homolog protein A (RBOHA).